Consider the following 199-residue polypeptide: Glycerol-3-phosphate acyltransferase (199 aa).

Transmembrane regions (helical) follow at residues 3 to 23, 50 to 70, 77 to 97, 110 to 130, and 136 to 156; these read YILIGLISYFCGAIPFSYLLP, VIGFICMVLDGVKAFVPVLVF, IHYTGISSIFAVLGHDFPVFL, GVFFALCPICGFTFLATWISI, and YVSLASIVGMYAASFVAFFFN.

Belongs to the PlsY family. In terms of assembly, probably interacts with PlsX.

The protein localises to the cell inner membrane. The catalysed reaction is an acyl phosphate + sn-glycerol 3-phosphate = a 1-acyl-sn-glycero-3-phosphate + phosphate. It functions in the pathway lipid metabolism; phospholipid metabolism. In terms of biological role, catalyzes the transfer of an acyl group from acyl-phosphate (acyl-PO(4)) to glycerol-3-phosphate (G3P) to form lysophosphatidic acid (LPA). This enzyme utilizes acyl-phosphate as fatty acyl donor, but not acyl-CoA or acyl-ACP. In Pseudothermotoga lettingae (strain ATCC BAA-301 / DSM 14385 / NBRC 107922 / TMO) (Thermotoga lettingae), this protein is Glycerol-3-phosphate acyltransferase.